We begin with the raw amino-acid sequence, 353 residues long: Pupal cuticle protein PCP52 (353 aa).

The signal sequence occupies residues methionine 1 to alanine 15. The segment at alanine 166–alanine 195 is disordered. The span at aspartate 179–glutamate 189 shows a compositional bias: polar residues.

Component of the cuticle of the pupa of Galleria mellonella. In Galleria mellonella (Greater wax moth), this protein is Pupal cuticle protein PCP52 (PCP52).